The primary structure comprises 136 residues: Large ribosomal subunit protein bL17 (136 aa).

This sequence belongs to the bacterial ribosomal protein bL17 family. As to quaternary structure, part of the 50S ribosomal subunit. Contacts protein L32.

The protein is Large ribosomal subunit protein bL17 of Rickettsia conorii (strain ATCC VR-613 / Malish 7).